The chain runs to 97 residues: UPF0125 protein plu3376 (97 aa).

It belongs to the UPF0125 (RnfH) family.

This chain is UPF0125 protein plu3376, found in Photorhabdus laumondii subsp. laumondii (strain DSM 15139 / CIP 105565 / TT01) (Photorhabdus luminescens subsp. laumondii).